The primary structure comprises 318 residues: Gamma-glutamyl hydrolase (318 aa).

An N-terminal signal peptide occupies residues 1–24; the sequence is MARLGRLLSVLGLVLCGATGLGLS. The Gamma-glutamyl hydrolase domain occupies 25 to 318; it reads APPAPTPKKP…SSFQQSYIFD (294 aa). N-linked (GlcNAc...) asparagine glycosylation occurs at N116. Residue C134 is the Nucleophile of the active site. N-linked (GlcNAc...) asparagine glycosylation is found at N163 and N203. The active-site Proton donor is H244. An N-linked (GlcNAc...) asparagine glycan is attached at N307.

This sequence belongs to the peptidase C26 family. As to quaternary structure, homodimer.

The protein localises to the secreted. It localises to the extracellular space. The protein resides in the lysosome. It is found in the melanosome. It catalyses the reaction (6S)-5,6,7,8-tetrahydrofolyl-(gamma-L-Glu)(n) + (n-1) H2O = (6S)-5,6,7,8-tetrahydrofolate + (n-1) L-glutamate. In terms of biological role, hydrolyzes the polyglutamate sidechains of pteroylpolyglutamates. Progressively removes gamma-glutamyl residues from pteroylpoly-gamma-glutamate to yield pteroyl-alpha-glutamate (folic acid) and free glutamate. May play an important role in the bioavailability of dietary pteroylpolyglutamates and in the metabolism of pteroylpolyglutamates and antifolates. Exhibits either endo- or exopeptidase activity depending upon the tissue of origin. When secreted, it acts primarily as an endopeptidase. This Bos taurus (Bovine) protein is Gamma-glutamyl hydrolase (GGH).